Consider the following 793-residue polypeptide: Copalyl diphosphate synthase CPS1, chloroplastic (793 aa).

The transit peptide at 1–59 (MASLSSTILSRSPAARRRITPASAKLHRPECFATSAWMGSSSKNLSLSYQLNHKKISVA) directs the protein to the chloroplast. Lysine 238 is a substrate binding site. Residues aspartate 370 and aspartate 372 each contribute to the Mg(2+) site. Positions 370–373 (DIDD) match the DXDD motif motif. Lysine 457 is a substrate binding site.

This sequence belongs to the terpene synthase family. Mg(2+) serves as cofactor.

Its subcellular location is the plastid. It is found in the chloroplast. The catalysed reaction is (2E,6E,10E)-geranylgeranyl diphosphate = (+)-copalyl diphosphate. The protein operates within secondary metabolite biosynthesis; terpenoid biosynthesis. In terms of biological role, involved in tanshinone biosynthesis in hairy roots. Catalyzes the conversion of geranylgeranyl diphosphate (GGPP) to copalyl diphosphate (CPP). The polypeptide is Copalyl diphosphate synthase CPS1, chloroplastic (Salvia miltiorrhiza (Chinese sage)).